A 55-amino-acid chain; its full sequence is Large ribosomal subunit protein bL33 (55 aa).

The protein belongs to the bacterial ribosomal protein bL33 family.

In Micrococcus luteus (strain ATCC 4698 / DSM 20030 / JCM 1464 / CCM 169 / CCUG 5858 / IAM 1056 / NBRC 3333 / NCIMB 9278 / NCTC 2665 / VKM Ac-2230) (Micrococcus lysodeikticus), this protein is Large ribosomal subunit protein bL33.